Here is a 270-residue protein sequence, read N- to C-terminus: 4-hydroxy-tetrahydrodipicolinate reductase (270 aa).

NAD(+) is bound by residues 9 to 14 (GAGGRM) and glutamate 35. Arginine 36 contributes to the NADP(+) binding site. NAD(+)-binding positions include 99 to 101 (GTT) and 123 to 126 (ASNY). The active-site Proton donor/acceptor is the histidine 156. Residue histidine 157 coordinates (S)-2,3,4,5-tetrahydrodipicolinate. The active-site Proton donor is lysine 160. 166-167 (GT) provides a ligand contact to (S)-2,3,4,5-tetrahydrodipicolinate.

Belongs to the DapB family.

Its subcellular location is the cytoplasm. The enzyme catalyses (S)-2,3,4,5-tetrahydrodipicolinate + NAD(+) + H2O = (2S,4S)-4-hydroxy-2,3,4,5-tetrahydrodipicolinate + NADH + H(+). It catalyses the reaction (S)-2,3,4,5-tetrahydrodipicolinate + NADP(+) + H2O = (2S,4S)-4-hydroxy-2,3,4,5-tetrahydrodipicolinate + NADPH + H(+). Its pathway is amino-acid biosynthesis; L-lysine biosynthesis via DAP pathway; (S)-tetrahydrodipicolinate from L-aspartate: step 4/4. Catalyzes the conversion of 4-hydroxy-tetrahydrodipicolinate (HTPA) to tetrahydrodipicolinate. This is 4-hydroxy-tetrahydrodipicolinate reductase from Histophilus somni (strain 129Pt) (Haemophilus somnus).